The chain runs to 333 residues: tRNA dimethylallyltransferase (333 aa).

23–30 (GPTGAGKT) is a binding site for ATP. Residue 25–30 (TGAGKT) participates in substrate binding. Interaction with substrate tRNA stretches follow at residues 53-56 (DSAL) and 177-181 (QRVQR).

Belongs to the IPP transferase family. As to quaternary structure, monomer. Mg(2+) is required as a cofactor.

It catalyses the reaction adenosine(37) in tRNA + dimethylallyl diphosphate = N(6)-dimethylallyladenosine(37) in tRNA + diphosphate. Functionally, catalyzes the transfer of a dimethylallyl group onto the adenine at position 37 in tRNAs that read codons beginning with uridine, leading to the formation of N6-(dimethylallyl)adenosine (i(6)A). This is tRNA dimethylallyltransferase from Polynucleobacter asymbioticus (strain DSM 18221 / CIP 109841 / QLW-P1DMWA-1) (Polynucleobacter necessarius subsp. asymbioticus).